Here is a 147-residue protein sequence, read N- to C-terminus: Large ribosomal subunit protein uL15 (147 aa).

The segment covering 1 to 28 (MIRRRKKVRKLRGSHTHGWGCKKKHRGG) has biased composition (basic residues). Residues 1-43 (MIRRRKKVRKLRGSHTHGWGCKKKHRGGGSKGGRGMAGTGKRN) form a disordered region. Positions 29 to 38 (GSKGGRGMAG) are enriched in gly residues.

Belongs to the universal ribosomal protein uL15 family. In terms of assembly, part of the 50S ribosomal subunit.

In terms of biological role, binds to the 23S rRNA. The polypeptide is Large ribosomal subunit protein uL15 (Pyrococcus horikoshii (strain ATCC 700860 / DSM 12428 / JCM 9974 / NBRC 100139 / OT-3)).